The chain runs to 216 residues: MFAVLKTGGKQYKVQAGDMLRVEKLAADAGETVQFNEVLMLGGENTVVGAPFVKDAGVQAEVVDQIKGEKVINFVKRRRKHSSKRTKGHRQKLTLVKVTDILASGADKSGVKAAMGAGSVSATAVAAAAPKPTKKAAPAKAEKAEAAPAAGADDLKKLSGVGPALEKKLIEGGVTSFAQIAAWTEADVAAMDEKLSFKGRIEREGWIEQAKELAKG.

It belongs to the bacterial ribosomal protein bL21 family. In terms of assembly, part of the 50S ribosomal subunit. Contacts protein L20.

This protein binds to 23S rRNA in the presence of protein L20. In Roseobacter denitrificans (strain ATCC 33942 / OCh 114) (Erythrobacter sp. (strain OCh 114)), this protein is Large ribosomal subunit protein bL21.